We begin with the raw amino-acid sequence, 339 residues long: Ketol-acid reductoisomerase (NADP(+)) (339 aa).

Residues 1 to 182 (MRVYYDRDAD…GGGRAGIIET (182 aa)) enclose the KARI N-terminal Rossmann domain. NADP(+) contacts are provided by residues 24–27 (YGSQ), arginine 48, serine 51, threonine 53, and 83–86 (DELQ). Histidine 108 is a catalytic residue. Glycine 134 lines the NADP(+) pocket. Positions 183–328 (SFKEECETDL…AKLRDMMPWI (146 aa)) constitute a KARI C-terminal knotted domain. Residues aspartate 191, glutamate 195, glutamate 227, and glutamate 231 each coordinate Mg(2+). Residue serine 252 participates in substrate binding.

It belongs to the ketol-acid reductoisomerase family. Mg(2+) serves as cofactor.

It catalyses the reaction (2R)-2,3-dihydroxy-3-methylbutanoate + NADP(+) = (2S)-2-acetolactate + NADPH + H(+). It carries out the reaction (2R,3R)-2,3-dihydroxy-3-methylpentanoate + NADP(+) = (S)-2-ethyl-2-hydroxy-3-oxobutanoate + NADPH + H(+). The protein operates within amino-acid biosynthesis; L-isoleucine biosynthesis; L-isoleucine from 2-oxobutanoate: step 2/4. Its pathway is amino-acid biosynthesis; L-valine biosynthesis; L-valine from pyruvate: step 2/4. Functionally, involved in the biosynthesis of branched-chain amino acids (BCAA). Catalyzes an alkyl-migration followed by a ketol-acid reduction of (S)-2-acetolactate (S2AL) to yield (R)-2,3-dihydroxy-isovalerate. In the isomerase reaction, S2AL is rearranged via a Mg-dependent methyl migration to produce 3-hydroxy-3-methyl-2-ketobutyrate (HMKB). In the reductase reaction, this 2-ketoacid undergoes a metal-dependent reduction by NADPH to yield (R)-2,3-dihydroxy-isovalerate. The protein is Ketol-acid reductoisomerase (NADP(+)) of Rhodopseudomonas palustris (strain HaA2).